Here is a 612-residue protein sequence, read N- to C-terminus: uncharacterized protein (612 aa).

The protein resides in the plastid. It localises to the chloroplast. This is an uncharacterized protein from Pyropia yezoensis (Susabi-nori).